We begin with the raw amino-acid sequence, 1174 residues long: Nucleolar complex protein 1 (1174 aa).

Disordered regions lie at residues Met1–Ile20, Val29–Gln237, Tyr715–Ser742, Ala893–Gly922, Gly944–Ser1085, and Val1116–His1174. The span at Asn33–Ala63 shows a compositional bias: basic and acidic residues. Polar residues predominate over residues Ala95–Lys104. Composition is skewed to basic and acidic residues over residues Lys113–His122 and Lys176–Ala200. 2 stretches are compositionally biased toward acidic residues: residues Ser207–Gly216 and Tyr715–Asp724. Basic and acidic residues-rich tracts occupy residues Thr725–Val739 and Lys897–Ala906. Acidic residues-rich tracts occupy residues Glu907–Glu916, Val945–Leu954, Ala981–Ser1038, and Asp1048–Asp1065. A compositionally biased stretch (basic and acidic residues) spans Asn1127–Arg1143. Over residues Gly1156–Gln1166 the composition is skewed to low complexity.

The protein belongs to the CBF/MAK21 family.

Its subcellular location is the nucleus. It localises to the nucleolus. In terms of biological role, involved in rRNA processing and ribosome maturation. May also act as a transcription factor. The polypeptide is Nucleolar complex protein 1 (Drosophila melanogaster (Fruit fly)).